Consider the following 354-residue polypeptide: Putrescine/cadaverine-binding protein (354 aa).

The first 20 residues, 1–20, serve as a signal peptide directing secretion; the sequence is MMKKLLLVATLMAGAAQATA.

The protein belongs to the bacterial solute-binding protein 1 family.

The protein localises to the periplasm. Functionally, binds putrescine and cadaverine. The protein is Putrescine/cadaverine-binding protein of Pseudomonas aeruginosa (strain ATCC 15692 / DSM 22644 / CIP 104116 / JCM 14847 / LMG 12228 / 1C / PRS 101 / PAO1).